We begin with the raw amino-acid sequence, 306 residues long: D-alanine--D-alanine ligase (306 aa).

An ATP-grasp domain is found at 101 to 301 (KKILAHAGLP…FPDLVEHLVR (201 aa)). 129 to 185 (VAELGLPVVVKAPTQGSSIGVYIVEREEDLEARITDAVAYGGTRVLVEKFIAGPELT) is an ATP binding site. The Mg(2+) site is built by D256, E268, and N270.

The protein belongs to the D-alanine--D-alanine ligase family. The cofactor is Mg(2+). Mn(2+) serves as cofactor.

The protein resides in the cytoplasm. The catalysed reaction is 2 D-alanine + ATP = D-alanyl-D-alanine + ADP + phosphate + H(+). The protein operates within cell wall biogenesis; peptidoglycan biosynthesis. Cell wall formation. In Desulforudis audaxviator (strain MP104C), this protein is D-alanine--D-alanine ligase.